A 240-amino-acid polypeptide reads, in one-letter code: 6-carboxyhexanoate--CoA ligase (240 aa).

It belongs to the BioW family. As to quaternary structure, homodimer. Mg(2+) serves as cofactor.

It carries out the reaction heptanedioate + ATP + CoA = 6-carboxyhexanoyl-CoA + AMP + diphosphate. It functions in the pathway metabolic intermediate metabolism; pimeloyl-CoA biosynthesis; pimeloyl-CoA from pimelate: step 1/1. In terms of biological role, catalyzes the transformation of pimelate into pimeloyl-CoA with concomitant hydrolysis of ATP to AMP. The chain is 6-carboxyhexanoate--CoA ligase from Aquifex aeolicus (strain VF5).